Consider the following 308-residue polypeptide: MAQEVVEGFKFEQRHGKERVRVARVWRTPQGRHFVVEWRVGITLFSDCVNSYLRDDNSDIVATDTMKNTVYAKAKECSDILSVEDFAILLAKHFVSFYKKVTGAIVNIVEKPWERVIVDGQPHQHGFTLGSEKHTTEAIVQKSGSLQLTSGIEGLSVLKTTQSGFENFIRNKYTALPDTRERILATEVTALWRYSYESLYNLPQKPLYFTDKYLEVKKVLADTFFGPPNRGVYSPSVQNTLYLMAKATLNRFPDIAYVHLKMPNLHFLPVNISSKDGPIVKFEDDVYLPTDEPHGSIEASLSRVWSKL.

Catalysis depends on charge relay system residues lysine 17 and threonine 63. The urate site is built by threonine 63, aspartate 64, phenylalanine 165, arginine 182, valine 237, glutamine 238, and asparagine 264. Catalysis depends on histidine 266, which acts as the Charge relay system. The short motif at serine 306–leucine 308 is the Microbody targeting signal element.

Belongs to the uricase family. As to quaternary structure, homotetramer. In terms of tissue distribution, expressed predominantly in the uninfected cells of the central tissue of the root nodule. Also expressed in the nodule parenchyma cells and vascular tissue, in the roots, stems and leaves of uninfected adult plants, and in the cotyledons, roots and hypocotyls of developing seedlings. Localized to the metaxylem parenchyma cells and phloem fibers of developing roots.

It is found in the peroxisome. It carries out the reaction urate + O2 + H2O = 5-hydroxyisourate + H2O2. The protein operates within purine metabolism; urate degradation; (S)-allantoin from urate: step 1/3. Functionally, catalyzes the oxidation of uric acid to 5-hydroxyisourate, which is further processed to form (S)-allantoin. The sequence is that of Uricase-2 (URIII) from Phaseolus vulgaris (Kidney bean).